Reading from the N-terminus, the 281-residue chain is Probable endonuclease 4 (281 aa).

Residues histidine 69, histidine 109, glutamate 145, aspartate 179, histidine 182, histidine 216, aspartate 229, histidine 231, and glutamate 261 each contribute to the Zn(2+) site.

Belongs to the AP endonuclease 2 family. Zn(2+) serves as cofactor.

It catalyses the reaction Endonucleolytic cleavage to 5'-phosphooligonucleotide end-products.. Functionally, endonuclease IV plays a role in DNA repair. It cleaves phosphodiester bonds at apurinic or apyrimidinic (AP) sites, generating a 3'-hydroxyl group and a 5'-terminal sugar phosphate. The protein is Probable endonuclease 4 of Pectobacterium atrosepticum (strain SCRI 1043 / ATCC BAA-672) (Erwinia carotovora subsp. atroseptica).